The sequence spans 141 residues: Protein MGF 100-2L (141 aa).

This sequence belongs to the asfivirus MGF 100 family.

Plays a role in virus cell tropism, and may be required for efficient virus replication in macrophages. The sequence is that of Protein MGF 100-2L from African swine fever virus (isolate Tick/Malawi/Lil 20-1/1983) (ASFV).